Here is a 359-residue protein sequence, read N- to C-terminus: Protein FAM50 homolog (359 aa).

Disordered regions lie at residues 122-150 (NLDD…EDQP) and 339-359 (PYDP…KSKK). The segment covering 123–136 (LDDDEEEEEEDDED) has biased composition (acidic residues). Residues 137–150 (HDKKQLKIKQEDQP) show a composition bias toward basic and acidic residues.

It belongs to the FAM50 family.

This is Protein FAM50 homolog from Drosophila melanogaster (Fruit fly).